A 126-amino-acid chain; its full sequence is Protein LiaI (126 aa).

A run of 2 helical transmembrane segments spans residues 11-31 (FLLIVFGISVFFGGGSFGFII) and 56-76 (IIVGGIGAIMLICSLPFVVGI).

The protein resides in the cell membrane. In Bacillus subtilis (strain 168), this protein is Protein LiaI (liaI).